Consider the following 112-residue polypeptide: DNA-binding protein PF1087 (112 aa).

It belongs to the PDCD5 family.

The sequence is that of DNA-binding protein PF1087 from Pyrococcus furiosus (strain ATCC 43587 / DSM 3638 / JCM 8422 / Vc1).